Consider the following 73-residue polypeptide: U3-agatoxin-Ao1i (73 aa).

The signal sequence occupies residues 1–20; the sequence is MRTIISLLLLSAMVFAEIEA. The propeptide occupies 21-34; that stretch reads ISLEEGLQLFEGER. 4 disulfides stabilise this stretch: C36–C52, C43–C57, C51–C67, and C59–C65. At S71 the chain carries Serine amide.

Belongs to the neurotoxin 07 (Beta/delta-agtx) family. 03 (aga-4) subfamily. Aga sub-subfamily. Expressed by the venom gland.

It localises to the secreted. In terms of biological role, insecticidal neurotoxin that induces an irreversible spastic paralysis when injected into insects. Modifies presynaptic voltage-gated sodium channels (Nav), causing them to open at the normal resting potential of the nerve. This leads to spontaneous release of neurotransmitter and repetitive action potentials in motor neurons. This chain is U3-agatoxin-Ao1i, found in Agelena orientalis (Funnel-web spider).